A 340-amino-acid chain; its full sequence is Ribosomal RNA small subunit methyltransferase C (340 aa).

The protein belongs to the methyltransferase superfamily. RsmC family. Monomer.

Its subcellular location is the cytoplasm. It catalyses the reaction guanosine(1207) in 16S rRNA + S-adenosyl-L-methionine = N(2)-methylguanosine(1207) in 16S rRNA + S-adenosyl-L-homocysteine + H(+). Specifically methylates the guanine in position 1207 of 16S rRNA in the 30S particle. The chain is Ribosomal RNA small subunit methyltransferase C from Vibrio vulnificus (strain CMCP6).